Consider the following 215-residue polypeptide: Nascent polypeptide-associated complex subunit alpha (215 aa).

The tract at residues 1-81 (MPGEATETVP…SEKKARKAMS (81 aa)) is disordered. Residues 9-28 (VPATEQELPQPQAETGSGTE) show a composition bias toward polar residues. Positions 29-40 (SDSDESVPELEG) are enriched in acidic residues. Position 43 is a phosphoserine; by ILK1 (Ser-43). Residues 44–57 (TQATTQQAQLAAAA) are compositionally biased toward low complexity. The segment at 69 to 80 (QSRSEKKARKAM) is required for DNA-binding. In terms of domain architecture, NAC-A/B spans 70-135 (SRSEKKARKA…AKIEDLSQQA (66 aa)). Residues 93-108 (RVTIRKSKNILFVITK) are RNA/DNA-binding. Ser-132 bears the Phosphoserine mark. The residue at position 142 (Lys-142) is an N6-acetyllysine; alternate. Residue Lys-142 forms a Glycyl lysine isopeptide (Lys-Gly) (interchain with G-Cter in SUMO2); alternate linkage. Thr-159 is modified (phosphothreonine; by GSK3-beta). Thr-161 is modified (phosphothreonine). Phosphoserine occurs at positions 166, 186, 191, and 203. Residues 176-213 (VEVKDIEWVMSQANVSRAKAVRALKNNSNNIVNAIMEL) enclose the UBA domain.

This sequence belongs to the NAC-alpha family. As to quaternary structure, part of the nascent polypeptide-associated complex (NAC), which is a heterodimer of NACA and BTF3 (via NAC-A/B domains). NAC associates with ribosomes through the BTF3/NACB subunit and contacts the ribosomal protein L23, which is positioned near the exiting site. Both subunits can contact nascent polypeptide chains. NACA may also form homodimers, and only this form binds DNA. Interacts with TBP and JUN. In terms of processing, phosphorylation of Ser-43 by ILK during cell adhesion may promote nuclear localization. Phosphorylation of Thr-159 by GSK3B may promote proteasome mediated degradation.

It localises to the cytoplasm. The protein resides in the nucleus. Functionally, prevents inappropriate targeting of non-secretory polypeptides to the endoplasmic reticulum (ER). Binds to nascent polypeptide chains as they emerge from the ribosome and blocks their interaction with the signal recognition particle (SRP), which normally targets nascent secretory peptides to the ER. Also reduces the inherent affinity of ribosomes for protein translocation sites in the ER membrane (M sites). May act as a specific coactivator for JUN, binding to DNA and stabilizing the interaction of JUN homodimers with target gene promoters. The sequence is that of Nascent polypeptide-associated complex subunit alpha from Chinchilla lanigera (Long-tailed chinchilla).